A 336-amino-acid polypeptide reads, in one-letter code: Biotin synthase (336 aa).

Positions 54-281 (QAIQLSTLLS…KSYVRLSAGR (228 aa)) constitute a Radical SAM core domain. The [4Fe-4S] cluster site is built by cysteine 69, cysteine 73, and cysteine 76. Positions 113, 144, 204, and 276 each coordinate [2Fe-2S] cluster.

This sequence belongs to the radical SAM superfamily. Biotin synthase family. In terms of assembly, homodimer. Requires [4Fe-4S] cluster as cofactor. [2Fe-2S] cluster is required as a cofactor.

It catalyses the reaction (4R,5S)-dethiobiotin + (sulfur carrier)-SH + 2 reduced [2Fe-2S]-[ferredoxin] + 2 S-adenosyl-L-methionine = (sulfur carrier)-H + biotin + 2 5'-deoxyadenosine + 2 L-methionine + 2 oxidized [2Fe-2S]-[ferredoxin]. It functions in the pathway cofactor biosynthesis; biotin biosynthesis; biotin from 7,8-diaminononanoate: step 2/2. Functionally, catalyzes the conversion of dethiobiotin (DTB) to biotin by the insertion of a sulfur atom into dethiobiotin via a radical-based mechanism. The chain is Biotin synthase from Actinobacillus pleuropneumoniae serotype 7 (strain AP76).